The chain runs to 450 residues: tRNA-2-methylthio-N(6)-dimethylallyladenosine synthase (450 aa).

Positions 3–118 (KKVFIKTFGC…LPELLQQRER (116 aa)) constitute an MTTase N-terminal domain. The [4Fe-4S] cluster site is built by cysteine 12, cysteine 49, cysteine 81, cysteine 155, cysteine 159, and cysteine 162. The Radical SAM core domain maps to 141–376 (SVQGASAFVS…VIDTHIRSIS (236 aa)). Residues 377-440 (ASRVGTVQRI…AYTLRGQYCA (64 aa)) enclose the TRAM domain.

The protein belongs to the methylthiotransferase family. MiaB subfamily. As to quaternary structure, monomer. The cofactor is [4Fe-4S] cluster.

It is found in the cytoplasm. It carries out the reaction N(6)-dimethylallyladenosine(37) in tRNA + (sulfur carrier)-SH + AH2 + 2 S-adenosyl-L-methionine = 2-methylsulfanyl-N(6)-dimethylallyladenosine(37) in tRNA + (sulfur carrier)-H + 5'-deoxyadenosine + L-methionine + A + S-adenosyl-L-homocysteine + 2 H(+). Functionally, catalyzes the methylthiolation of N6-(dimethylallyl)adenosine (i(6)A), leading to the formation of 2-methylthio-N6-(dimethylallyl)adenosine (ms(2)i(6)A) at position 37 in tRNAs that read codons beginning with uridine. This Verminephrobacter eiseniae (strain EF01-2) protein is tRNA-2-methylthio-N(6)-dimethylallyladenosine synthase.